A 156-amino-acid polypeptide reads, in one-letter code: Aspartate carbamoyltransferase regulatory chain (156 aa).

The Zn(2+) site is built by Cys109, Cys114, Cys140, and Cys143.

This sequence belongs to the PyrI family. Contains catalytic and regulatory chains. Requires Zn(2+) as cofactor.

In terms of biological role, involved in allosteric regulation of aspartate carbamoyltransferase. This is Aspartate carbamoyltransferase regulatory chain from Methanosarcina barkeri (strain Fusaro / DSM 804).